An 828-amino-acid polypeptide reads, in one-letter code: DNA gyrase subunit A (828 aa).

The Topo IIA-type catalytic domain occupies 32–497; the sequence is LPDVRDGLKP…EVLSLEDEDL (466 aa). Catalysis depends on Y120, which acts as the O-(5'-phospho-DNA)-tyrosine intermediate. A GyrA-box motif is present at residues 524 to 530; it reads QKRGGRG.

The protein belongs to the type II topoisomerase GyrA/ParC subunit family. In terms of assembly, heterotetramer, composed of two GyrA and two GyrB chains. In the heterotetramer, GyrA contains the active site tyrosine that forms a transient covalent intermediate with DNA, while GyrB binds cofactors and catalyzes ATP hydrolysis.

Its subcellular location is the cytoplasm. The enzyme catalyses ATP-dependent breakage, passage and rejoining of double-stranded DNA.. In terms of biological role, a type II topoisomerase that negatively supercoils closed circular double-stranded (ds) DNA in an ATP-dependent manner to modulate DNA topology and maintain chromosomes in an underwound state. Negative supercoiling favors strand separation, and DNA replication, transcription, recombination and repair, all of which involve strand separation. Also able to catalyze the interconversion of other topological isomers of dsDNA rings, including catenanes and knotted rings. Type II topoisomerases break and join 2 DNA strands simultaneously in an ATP-dependent manner. In Streptococcus pyogenes serotype M18 (strain MGAS8232), this protein is DNA gyrase subunit A.